The sequence spans 133 residues: Probable mitochondrial pyruvate carrier 2 (133 aa).

3 helical membrane passes run 39–55 (VTNLAPMMKWSLSIVPI), 73–91 (ASSLCATGSIWTYYATLIS), and 99–116 (MLAACNAAMAACHGYNIY).

The protein belongs to the mitochondrial pyruvate carrier (MPC) (TC 2.A.105) family.

It is found in the mitochondrion inner membrane. Its function is as follows. May mediate the uptake of pyruvate into mitochondria. The protein is Probable mitochondrial pyruvate carrier 2 of Dictyostelium discoideum (Social amoeba).